Here is a 452-residue protein sequence, read N- to C-terminus: Sensor histidine kinase HprS (452 aa).

The Cytoplasmic portion of the chain corresponds to 1-9 (MKRLSITVR). Residues 10-30 (LTLLFILLLSVAGAGIVWTLY) traverse the membrane as a helical segment. Residues 31–158 (NGLASELKWR…ARHNMLEQYK (128 aa)) are Periplasmic-facing. The chain crosses the membrane as a helical span at residues 159–179 (INSIIICIVAIVLCSVLSPLL). Residues 180-452 (IRTGLREIKK…VFRITLPQRN (273 aa)) are Cytoplasmic-facing. Residues 181 to 234 (RTGLREIKKLSGVTEALNYNDSREPVEVSALPRELKPLGQALNKMHHALVKDFE) enclose the HAMP domain. The Histidine kinase domain occupies 242–452 (DLAHELRTPI…VFRITLPQRN (211 aa)). Histidine 245 is modified (phosphohistidine; by autocatalysis).

Post-translationally, autophosphorylated.

Its subcellular location is the cell inner membrane. It catalyses the reaction ATP + protein L-histidine = ADP + protein N-phospho-L-histidine.. Its function is as follows. Member of a two-component regulatory system HprR/HprS involved in response to hydrogen peroxide. Senses H(2)O(2), maybe via the redox state of the membrane. Activates HprR by phosphorylation. Can also phosphorylate CusR. The sequence is that of Sensor histidine kinase HprS from Escherichia coli (strain K12).